We begin with the raw amino-acid sequence, 321 residues long: Ribosomal protein L11 methyltransferase (321 aa).

T150, G171, D193, and N256 together coordinate S-adenosyl-L-methionine.

Belongs to the methyltransferase superfamily. PrmA family.

It localises to the cytoplasm. It carries out the reaction L-lysyl-[protein] + 3 S-adenosyl-L-methionine = N(6),N(6),N(6)-trimethyl-L-lysyl-[protein] + 3 S-adenosyl-L-homocysteine + 3 H(+). Functionally, methylates ribosomal protein L11. The polypeptide is Ribosomal protein L11 methyltransferase (Herpetosiphon aurantiacus (strain ATCC 23779 / DSM 785 / 114-95)).